The following is a 967-amino-acid chain: Aminopeptidase N (967 aa).

The Cytoplasmic portion of the chain corresponds to 2–8 (AKGFYIS). Residues 9-32 (KSLGILGILLGVAAVCTIIALSVV) form a helical; Signal-anchor for type II membrane protein membrane-spanning segment. Residues 33-68 (YSQEKNKNANSSPVASTTPSASATTNPASATTLDQS) are cytosolic Ser/Thr-rich junction. At 33-967 (YSQEKNKNAN…VLQWFTENSK (935 aa)) the chain is on the extracellular side. Positions 40 to 62 (NANSSPVASTTPSASATTNPASA) are disordered. Residues 41 to 62 (ANSSPVASTTPSASATTNPASA) show a composition bias toward low complexity. The segment at 69–967 (KAWNRYRLPN…VLQWFTENSK (899 aa)) is metalloprotease. N128 carries N-linked (GlcNAc...) asparagine glycosylation. Y176 carries the sulfotyrosine modification. 2 N-linked (GlcNAc...) asparagine glycosylation sites follow: N234 and N265. Positions 288-295 (DYVEKQAS) are necessary and sufficient to mediate interaction with HCoV-229E. N-linked (GlcNAc...) asparagine glycosylation occurs at N319. Residue 352 to 356 (GAMEN) participates in substrate binding. Position 388 (H388) interacts with Zn(2+). The Proton acceptor role is filled by E389. 2 residues coordinate Zn(2+): H392 and E411. Residues Y419 and Y424 each carry the sulfotyrosine modification. Residues N527, N573, N625, N681, and N735 are each glycosylated (N-linked (GlcNAc...) asparagine). 2 disulfide bridges follow: C761/C768 and C798/C834. N818 carries N-linked (GlcNAc...) asparagine glycosylation. Y913 carries the post-translational modification Sulfotyrosine.

It belongs to the peptidase M1 family. In terms of assembly, homodimer. Interacts with SLC6A19. As to quaternary structure, (Microbial infection) Interacts with the S1 domain of human coronavirus 229E/HCoV-229E spike protein. Requires Zn(2+) as cofactor. Post-translationally, sulfated. N- and O-glycosylated. In terms of processing, may undergo proteolysis and give rise to a soluble form. Expressed in epithelial cells of the kidney, intestine, and respiratory tract; granulocytes, monocytes, fibroblasts, endothelial cells, cerebral pericytes at the blood-brain barrier, synaptic membranes of cells in the CNS. Also expressed in endometrial stromal cells, but not in the endometrial glandular cells. Found in the vasculature of tissues that undergo angiogenesis and in malignant gliomas and lymph node metastases from multiple tumor types but not in blood vessels of normal tissues. A soluble form has been found in plasma. It is found to be elevated in plasma and effusions of cancer patients.

The protein localises to the cell membrane. The enzyme catalyses Release of an N-terminal amino acid, Xaa-|-Yaa- from a peptide, amide or arylamide. Xaa is preferably Ala, but may be most amino acids including Pro (slow action). When a terminal hydrophobic residue is followed by a prolyl residue, the two may be released as an intact Xaa-Pro dipeptide.. Functionally, broad specificity aminopeptidase which plays a role in the final digestion of peptides generated from hydrolysis of proteins by gastric and pancreatic proteases. Also involved in the processing of various peptides including peptide hormones, such as angiotensin III and IV, neuropeptides, and chemokines. May also be involved the cleavage of peptides bound to major histocompatibility complex class II molecules of antigen presenting cells. May have a role in angiogenesis and promote cholesterol crystallization. May have a role in amino acid transport by acting as binding partner of amino acid transporter SLC6A19 and regulating its activity. In terms of biological role, (Microbial infection) Acts as a receptor for human coronavirus 229E/HCoV-229E. In case of human coronavirus 229E (HCoV-229E) infection, serves as receptor for HCoV-229E spike glycoprotein. Its function is as follows. (Microbial infection) Mediates as well Human cytomegalovirus (HCMV) infection. This is Aminopeptidase N (ANPEP) from Homo sapiens (Human).